The chain runs to 93 residues: MANKKKDHREEAVELLKQDAKRILQLIKVQMDNLTLPQCPAYEEVLDTQMYGLSREINFATRLGLIEPEEGKNLISALEKELSTLHELSMSKK.

This sequence belongs to the UPF0358 family.

This chain is UPF0358 protein lwe1048, found in Listeria welshimeri serovar 6b (strain ATCC 35897 / DSM 20650 / CCUG 15529 / CIP 8149 / NCTC 11857 / SLCC 5334 / V8).